A 1367-amino-acid chain; its full sequence is Histone acetyltransferase HAC2 (1367 aa).

Residues 110–151 (TSSIPGSSGSASETNSGSDITKQDFKNDSPSDSKKVQGSSTS) form a disordered region. Over residues 111 to 127 (SSIPGSSGSASETNSGS) the composition is skewed to low complexity. Positions 130 to 144 (TKQDFKNDSPSDSKK) are enriched in basic and acidic residues. Tandem repeats lie at residues 188 to 200 (KLGT…EPMK), 223 to 235 (KVYS…TTTK), 251 to 263 (KLGT…EPMK), 286 to 298 (KVYS…TTTK), 314 to 326 (KLGT…EPMK), 349 to 361 (KVYS…TTTK), 377 to 389 (KLGT…EPMK), 418 to 430 (KLGT…EPMK), 432 to 444 (DEGS…TTNK), 459 to 471 (KLGI…EPMK), 473 to 485 (DEGT…TTNK), and 500 to 512 (KLGI…EPMK). A 12 X 13 AA approximate repeats region spans residues 188 to 512 (KLGTVVDIVE…IGVDIVEPMK (325 aa)). A PHD-type zinc finger spans residues 688–765 (HQICSPCHSR…EYICPTCLLE (78 aa)). The CBP/p300-type HAT domain occupies 780-1213 (DSGAKDLPET…ILHHLHTSNK (434 aa)). Residues 903-905 (LDS), 922-923 (RT), and W978 contribute to the acetyl-CoA site. The segment at 1094–1157 (ELNYSCTRCS…QLSKVQVNGV (64 aa)) adopts a ZZ-type 1; degenerate zinc-finger fold. Zn(2+) contacts are provided by C1099, C1102, C1123, C1126, C1225, C1228, C1240, C1243, C1249, C1252, H1261, and H1263. A ZZ-type 2 zinc finger spans residues 1220–1273 (SSSLTCTACKKDVSTTIYFPCLLCPDYRACTGCYTKNRTLRHLHIFPTLPSANR). The segment at 1274–1359 (APSRTVMVLE…NCPVPQCRDR (86 aa)) adopts a TAZ-type zinc-finger fold.

In terms of tissue distribution, rosette leaves, stems and flowers.

It localises to the nucleus. It catalyses the reaction L-lysyl-[protein] + acetyl-CoA = N(6)-acetyl-L-lysyl-[protein] + CoA + H(+). In terms of biological role, acetyltransferase enzyme. Acetylates histones, giving a specific tag for transcriptional activation. No acetyltransferase activity found in vitro. The polypeptide is Histone acetyltransferase HAC2 (HAC2) (Arabidopsis thaliana (Mouse-ear cress)).